Consider the following 318-residue polypeptide: Protein RecA (318 aa).

53–60 (GPESSGKT) is a binding site for ATP.

It belongs to the RecA family.

The protein resides in the cytoplasm. In terms of biological role, can catalyze the hydrolysis of ATP in the presence of single-stranded DNA, the ATP-dependent uptake of single-stranded DNA by duplex DNA, and the ATP-dependent hybridization of homologous single-stranded DNAs. It interacts with LexA causing its activation and leading to its autocatalytic cleavage. In Bacteroides fragilis (strain YCH46), this protein is Protein RecA.